A 121-amino-acid chain; its full sequence is NLYQLWKMILQETGKNAAPSYGFYGCNCGVGSRGKPKDATDRCCFVHKCCYKALTDCSPKTDSYSYSWKDKTIVCGKNNPCLKQECECDKAVAICLRDNLDTYNKNYKIYPKPLCKKADDC.

Intrachain disulfides connect cysteine 26–cysteine 115, cysteine 28–cysteine 44, cysteine 43–cysteine 95, cysteine 49–cysteine 121, cysteine 50–cysteine 88, cysteine 57–cysteine 81, and cysteine 75–cysteine 86.

The protein belongs to the phospholipase A2 family. Group II subfamily. K49 sub-subfamily. Homodimer. As to expression, expressed by the venom gland.

It localises to the secreted. In terms of biological role, snake venom phospholipase A2 homolog that lacks enzymatic activity, but has myotoxic and cytolytic activities. The chain is Basic phospholipase A2 homolog from Metlapilcoatlus nummifer (Mexican jumping pitviper).